Here is a 453-residue protein sequence, read N- to C-terminus: tRNA modification GTPase MnmE (453 aa).

Positions 22, 79, and 119 each coordinate (6S)-5-formyl-5,6,7,8-tetrahydrofolate. Residues Gly215 to Gly376 form the TrmE-type G domain. Asn225 contacts K(+). Residues Asn225–Ser230, Thr244–Thr250, Asp269–Gly272, and Asn334–Asp337 each bind GTP. A Mg(2+)-binding site is contributed by Ser229. 3 residues coordinate K(+): Thr244, Ile246, and Thr249. Mg(2+) is bound at residue Thr250. Position 453 (Lys453) interacts with (6S)-5-formyl-5,6,7,8-tetrahydrofolate.

It belongs to the TRAFAC class TrmE-Era-EngA-EngB-Septin-like GTPase superfamily. TrmE GTPase family. As to quaternary structure, homodimer. Heterotetramer of two MnmE and two MnmG subunits. It depends on K(+) as a cofactor.

The protein localises to the cytoplasm. Exhibits a very high intrinsic GTPase hydrolysis rate. Involved in the addition of a carboxymethylaminomethyl (cmnm) group at the wobble position (U34) of certain tRNAs, forming tRNA-cmnm(5)s(2)U34. The polypeptide is tRNA modification GTPase MnmE (Vibrio cholerae serotype O1 (strain ATCC 39315 / El Tor Inaba N16961)).